The primary structure comprises 356 residues: Iron-regulated protein A (356 aa).

An N-terminal signal peptide occupies residues 1 to 44 (MIVTGSQVRQGLNTWFVLPLRRTAIGLGCAGVATLFSACGQTQA). Hydrophilic regions lie at residues 75-145 (QALQ…EQRE) and 240-310 (GGPL…ATAR).

As to quaternary structure, the iron-regulated protein A is one unit of the protein complex CPVI-4, which is synthesized under iron deficient conditions.

The protein localises to the cell inner membrane. Its function is as follows. IrpA occurs under iron-deficient growth conditions in cyanobacterium Synechococcus and disappears in cells recovering from iron starvation. It seems to be involved in iron acquisition, uptake or storage. The chain is Iron-regulated protein A (irpA) from Synechococcus elongatus (strain ATCC 33912 / PCC 7942 / FACHB-805) (Anacystis nidulans R2).